The primary structure comprises 476 residues: Aspartyl/glutamyl-tRNA(Asn/Gln) amidotransferase subunit B (476 aa).

This sequence belongs to the GatB/GatE family. GatB subfamily. As to quaternary structure, heterotrimer of A, B and C subunits.

It carries out the reaction L-glutamyl-tRNA(Gln) + L-glutamine + ATP + H2O = L-glutaminyl-tRNA(Gln) + L-glutamate + ADP + phosphate + H(+). The enzyme catalyses L-aspartyl-tRNA(Asn) + L-glutamine + ATP + H2O = L-asparaginyl-tRNA(Asn) + L-glutamate + ADP + phosphate + 2 H(+). Functionally, allows the formation of correctly charged Asn-tRNA(Asn) or Gln-tRNA(Gln) through the transamidation of misacylated Asp-tRNA(Asn) or Glu-tRNA(Gln) in organisms which lack either or both of asparaginyl-tRNA or glutaminyl-tRNA synthetases. The reaction takes place in the presence of glutamine and ATP through an activated phospho-Asp-tRNA(Asn) or phospho-Glu-tRNA(Gln). The sequence is that of Aspartyl/glutamyl-tRNA(Asn/Gln) amidotransferase subunit B from Lacticaseibacillus paracasei (strain ATCC 334 / BCRC 17002 / CCUG 31169 / CIP 107868 / KCTC 3260 / NRRL B-441) (Lactobacillus paracasei).